The chain runs to 133 residues: NLP effector protein 14 (133 aa).

The Conserved undecapeptide motifI I motif lies at 1-9; it reads MYSWYFPKD. The short motif at 16-22 is the Hepta-peptide GHRHDWE motif II element; it reads GHRHDWE.

It belongs to the Necrosis inducing protein (NPP1) family.

It is found in the secreted. Functionally, secreted effector that contributes strongly to virulence during infection by P.capsici. Causes large necrotic areas in both host C.annuum and non-host N.benthamiana. This Phytophthora capsici protein is NLP effector protein 14.